The sequence spans 156 residues: Glutaredoxin-2, mitochondrial (156 aa).

A mitochondrion-targeting transit peptide spans 1 to 19; it reads MSWRRAASVGRRLVASGRI. In terms of domain architecture, Glutaredoxin spans 50 to 150; sequence VNQIQETISN…PLVHQCYLKK (101 aa). Residue Cys-61 participates in [2Fe-2S] cluster binding. Glutathione is bound at residue Lys-67. Cys-70 carries the post-translational modification S-glutathionyl cysteine; alternate. Cys-70 and Cys-73 form a disulfide bridge. Glutathione is bound by residues Gln-102 and Val-114. Cys-146 lines the [2Fe-2S] cluster pocket.

This sequence belongs to the glutaredoxin family. In terms of assembly, monomer; active form. Homodimer; inactive form. The homodimer is probably linked by 1 2Fe-2S cluster. Widely expressed. Highly expressed in testis, and at much lower level in kidney and brain.

It is found in the mitochondrion. It localises to the nucleus. With respect to regulation, the 2Fe-2S present in the homodimer leads to inactivation of the enzyme. The 2Fe-2S may serve as a redox sensor: the presence of one-electron oxidants or reductants leading to the loss of the 2Fe-2S cluster, subsequent monomerization and activation of the enzyme. Its function is as follows. Glutathione-dependent oxidoreductase that facilitates the maintenance of mitochondrial redox homeostasis upon induction of apoptosis by oxidative stress. Involved in response to hydrogen peroxide and regulation of apoptosis caused by oxidative stress. Acts as a very efficient catalyst of monothiol reactions because of its high affinity for protein glutathione-mixed disulfides. Can receive electrons not only from glutathione (GSH), but also from thioredoxin reductase supporting both monothiol and dithiol reactions. Efficiently catalyzes both glutathionylation and deglutathionylation of mitochondrial complex I, which in turn regulates the superoxide production by the complex. Overexpression decreases the susceptibility to apoptosis and prevents loss of cardiolipin and cytochrome c release. The protein is Glutaredoxin-2, mitochondrial (Glrx2) of Mus musculus (Mouse).